Here is a 122-residue protein sequence, read N- to C-terminus: Small ribosomal subunit protein uS13 (122 aa).

Residues 98 to 122 (VRGQRTHTNARTRKGPAKAIAGKKK) are disordered.

Belongs to the universal ribosomal protein uS13 family. As to quaternary structure, part of the 30S ribosomal subunit. Forms a loose heterodimer with protein S19. Forms two bridges to the 50S subunit in the 70S ribosome.

Located at the top of the head of the 30S subunit, it contacts several helices of the 16S rRNA. In the 70S ribosome it contacts the 23S rRNA (bridge B1a) and protein L5 of the 50S subunit (bridge B1b), connecting the 2 subunits; these bridges are implicated in subunit movement. Contacts the tRNAs in the A and P-sites. The sequence is that of Small ribosomal subunit protein uS13 from Ruegeria sp. (strain TM1040) (Silicibacter sp.).